The sequence spans 208 residues: MTHFDTIQKGAQQMGAALSDETIQTLVKYLAMLEKWNKAYNLTAIRDVEQMISLHLLDSLATLPYITGDNIIDVGTGPGLPGMVLAICYPEKRFTLLDSNGKKTRFLTQVKMELGIHNATVANERVEKHSHQGEYDHVISRAFASLQDMINWTLPLPKETGNFLAMKGVYPSEEIAALPKEVGLVSVEPLNVPNVQAERHMVVMTRKG.

S-adenosyl-L-methionine contacts are provided by residues G75, L80, 126–127 (VE), and R141.

This sequence belongs to the methyltransferase superfamily. RNA methyltransferase RsmG family.

It is found in the cytoplasm. It catalyses the reaction guanosine(527) in 16S rRNA + S-adenosyl-L-methionine = N(7)-methylguanosine(527) in 16S rRNA + S-adenosyl-L-homocysteine. Its function is as follows. Specifically methylates the N7 position of guanine in position 527 of 16S rRNA. This Marinomonas sp. (strain MWYL1) protein is Ribosomal RNA small subunit methyltransferase G.